The chain runs to 354 residues: MVNYSNCHFIKSPIHLENQKFGRRPGQSIKISPKLAQNGMVEVIGLDFLSSHYHALAAIQRLLTATNYKGNTKGVVLSRESNSFQFEGWIPRIRFTKTEFLEAYGVKRYKTSRNKYEFSGKEAETALEALYHLGHQPFLIVATRTRWTNGTQIVDRYQTLSPIIRIYEGWEGLTDEENIDIDLTPFNSPSTRKHKGFVVEPCPILVDQIESYFVIKPANVYQEIKMRFPNASKYAYTFIDWVITAAAKKRRKLTKDNSWPENLFLNVNVKSLAYILRMNRYICTRNWKKIELAIDKCIEIAIQLGWLSRRKRIEFLDSSKLSKKEILYLNKERFEEITKKSKEQMEQLEQESIN.

The sequence is that of Virulence plasmid protein pGP2-D from Chlamydia trachomatis serovar L2 (strain ATCC VR-902B / DSM 19102 / 434/Bu).